We begin with the raw amino-acid sequence, 317 residues long: Ribosomal protein L11 methyltransferase (317 aa).

Thr158, Gly179, Asp201, and Asn244 together coordinate S-adenosyl-L-methionine.

This sequence belongs to the methyltransferase superfamily. PrmA family.

It is found in the cytoplasm. The enzyme catalyses L-lysyl-[protein] + 3 S-adenosyl-L-methionine = N(6),N(6),N(6)-trimethyl-L-lysyl-[protein] + 3 S-adenosyl-L-homocysteine + 3 H(+). Methylates ribosomal protein L11. The chain is Ribosomal protein L11 methyltransferase from Streptococcus pyogenes serotype M12 (strain MGAS2096).